The sequence spans 140 residues: Protein SNA4 (140 aa).

Topologically, residues 1–8 (MCCYCVCC) are cytoplasmic. S-palmitoyl cysteine attachment occurs at residues cysteine 2, cysteine 3, cysteine 5, cysteine 7, and cysteine 8. Residues 9-29 (TVSDFILYIVAFFFPPAAVLL) form a helical membrane-spanning segment. Residues 30–41 (RSGPCSSDFLLN) lie on the Vacuolar side of the membrane. Residues 42–62 (VLLTLLGFLPGMLHAFYYITI) form a helical membrane-spanning segment. Over 63–140 (TSPLRNAEYV…LVESPPPYVP (78 aa)) the chain is Cytoplasmic. Residues 84–140 (RNVPSNRPQNSQTPQNRPQQGSSARNVYPSVETPLLQGAAPHDNKQSLVESPPPYVP) are disordered. The segment covering 85 to 108 (NVPSNRPQNSQTPQNRPQQGSSAR) has biased composition (polar residues). Residue lysine 128 forms a Glycyl lysine isopeptide (Lys-Gly) (interchain with G-Cter in ubiquitin) linkage. Position 134 is a phosphoserine (serine 134).

The protein belongs to the UPF0057 (PMP3) family.

It localises to the vacuole membrane. The sequence is that of Protein SNA4 (SNA4) from Saccharomyces cerevisiae (strain ATCC 204508 / S288c) (Baker's yeast).